A 469-amino-acid polypeptide reads, in one-letter code: MKKLPEDFIFGGATAAYQAEGATQTDGKGRVAWDTYLEENYWYTAEPASDFYNKYPIDLELSEKFGVNGIRISIAWSRIFPKGYGEVNPKGVEYYHNLFKECHRRHVEPFVTLHHFDTPETLHSDGDFLNRKTIEYFVEYAKFCFEEFEEVNYWTTFNEIGPIGDGQYLVGKFPPGIKYDFAKVFQSHHNMMVAHAKAVKLFKDNGYSGEVGVVHALPTKYPYDPTNPEDVRAAELEDIIHNKFILDATYLGKYSRETMEGVQHILSVNGGKLDIPEEDYKVLEAAKDLNDFLGINYYMSDWMRGYDGESEITHNATGDKGGSKYQLKGVGQREFDVDVPRTDWDWMIYPKGLYDQIMRVVKDYPNYHKIYITENGLGYKDQFDEERKTVDDDARIDYVKKHLEVISDAIRDGANVKGYFIWSLMDVFSWSNGYEKRYGLFYVDFETQERYPKKSAYWYKELAESKEIK.

Residues Gln18, His115, Asn158, Glu159, and Asn296 each coordinate D-galactose 6-phosphate. The active-site Proton donor is Glu159. The Nucleophile role is filled by Glu374. D-galactose 6-phosphate is bound by residues Ser429, Trp430, Lys436, and Tyr438.

The protein belongs to the glycosyl hydrolase 1 family.

The enzyme catalyses a 6-phospho-beta-D-galactoside + H2O = D-galactose 6-phosphate + an alcohol. Its pathway is carbohydrate metabolism; lactose degradation; D-galactose 6-phosphate and beta-D-glucose from lactose 6-phosphate: step 1/1. This Staphylococcus haemolyticus (strain JCSC1435) protein is 6-phospho-beta-galactosidase.